The chain runs to 218 residues: Ribosomal RNA small subunit methyltransferase G (218 aa).

S-adenosyl-L-methionine is bound by residues G86, L91, 137 to 138, and R153; that span reads AE.

This sequence belongs to the methyltransferase superfamily. RNA methyltransferase RsmG family.

It is found in the cytoplasm. The enzyme catalyses guanosine(527) in 16S rRNA + S-adenosyl-L-methionine = N(7)-methylguanosine(527) in 16S rRNA + S-adenosyl-L-homocysteine. In terms of biological role, specifically methylates the N7 position of guanine in position 527 of 16S rRNA. This chain is Ribosomal RNA small subunit methyltransferase G, found in Nitratidesulfovibrio vulgaris (strain ATCC 29579 / DSM 644 / CCUG 34227 / NCIMB 8303 / VKM B-1760 / Hildenborough) (Desulfovibrio vulgaris).